The primary structure comprises 474 residues: MLTTGKKEFWFVVGSQHLYGEETLAEVRAHAQAMTDALNESAVLPYPLVLQDLAVNADKITSIMKEVNYRDEVAGVITWMHTFSPAKMWIRGTKLLQKPLLHLATQFNESIPWPTIDMDFMNLNQSAHGDREYGFINARLKKQNKVVVGYWERPEVQQQIAEWMDVAVAYNESFNIKVARFGDNMRNVAVTEGDKIEAQIQFGWTVDYFGIGDLVQYVNAVTDEEINRLFAEYADLYEFDYGTYSREDWEKSVKVQASYEIAIKRFLDDGGYNAFTTNFEDLYGMKQLPGLAVQRLMAQGYGFAGEGDWKTAALDRLLKVMSRNQSTGFMEDYTYELAAGQESILQSHMLEVDPSLASNKPKIIVSPLGIGDREDPARLVFDGKAGDGVVVSMADFGTHYKLLINEVSAFEPTVPAPNLPVARVLWEVKPNFQDGVKAWLENGGGHHTVVSLFLTTDQMITYAKLVDLEYVVIK.

The Mn(2+) site is built by E306, E331, H348, and H447.

This sequence belongs to the arabinose isomerase family. Mn(2+) serves as cofactor.

The enzyme catalyses beta-L-arabinopyranose = L-ribulose. The protein operates within carbohydrate degradation; L-arabinose degradation via L-ribulose; D-xylulose 5-phosphate from L-arabinose (bacterial route): step 1/3. Its function is as follows. Catalyzes the conversion of L-arabinose to L-ribulose. This Bacillus licheniformis (strain ATCC 14580 / DSM 13 / JCM 2505 / CCUG 7422 / NBRC 12200 / NCIMB 9375 / NCTC 10341 / NRRL NRS-1264 / Gibson 46) protein is L-arabinose isomerase 2.